Reading from the N-terminus, the 108-residue chain is Anti-CBASS protein 2 (108 aa).

Residues Gln4, Tyr11, and Lys26 each coordinate 3',3'-cGAMP.

Belongs to the Acb2 family. Homohexamer in apo and 3',3'-cGAMP-bound form.

Its function is as follows. Antagonizes CBASS (cyclic oligonucleotide-based antiphage signaling system). Binds and sequesters host-produced 3',3'-cyclic GMP-AMP (cGAMP) (thus preventing host CapV activation) without degrading the cyclic nucleotide. Probably binds some other cyclic dinucleotides as well. The chain is Anti-CBASS protein 2 from Pseudomonas phage JBD67.